The following is a 186-amino-acid chain: Ribosome-recycling factor (186 aa).

Residues 135-156 are disordered; sequence DANDEVKKLQKDKAVSEDEGKK.

Belongs to the RRF family.

The protein resides in the cytoplasm. Functionally, responsible for the release of ribosomes from messenger RNA at the termination of protein biosynthesis. May increase the efficiency of translation by recycling ribosomes from one round of translation to another. In Bdellovibrio bacteriovorus (strain ATCC 15356 / DSM 50701 / NCIMB 9529 / HD100), this protein is Ribosome-recycling factor.